A 523-amino-acid chain; its full sequence is Sensory neuron membrane protein 1 (523 aa).

Over 1 to 11 (MQLPRELKYAA) the chain is Cytoplasmic. Residues 12–32 (IAGGVALFGLIFGWVLFPTIL) form a helical membrane-spanning segment. The Extracellular portion of the chain corresponds to 33 to 458 (KSQLKKEMAL…HQLFIPKRVV (426 aa)). Residue asparagine 229 is glycosylated (N-linked (GlcNAc...) asparagine). 3 cysteine pairs are disulfide-bonded: cysteine 268–cysteine 333, cysteine 297–cysteine 352, and cysteine 335–cysteine 341. N-linked (GlcNAc...) asparagine glycosylation is present at asparagine 440. Residues 459–479 (GVLRWWMVSFGSLGAVIGIVF) form a helical membrane-spanning segment. Residues 480–523 (HFRDHIMRLAVSGDTKVSKVIPEVEEQKDISVIGQAQEPAKVNI) are Cytoplasmic-facing.

The protein belongs to the CD36 family.

The protein localises to the cell membrane. Plays an olfactory role that is not restricted to pheromone sensitivity. This Helicoverpa assulta (Oriental tobacco budworm) protein is Sensory neuron membrane protein 1.